Here is a 385-residue protein sequence, read N- to C-terminus: Chaperone protein DnaJ (385 aa).

The region spanning 5-70 (DFYEVLGVSR…QKKAAYDQYG (66 aa)) is the J domain. The segment at 137 to 214 (GVSKEIEVPT…CHGQGRKQKT (78 aa)) adopts a CR-type zinc-finger fold. Residues Cys150, Cys153, Cys167, Cys170, Cys189, Cys192, Cys202, and Cys205 each coordinate Zn(2+). 4 CXXCXGXG motif repeats span residues 150-157 (CDTCDGSG), 167-174 (CGTCHGHG), 189-196 (CPTCHGKG), and 202-209 (CNECHGQG).

The protein belongs to the DnaJ family. Homodimer. Zn(2+) is required as a cofactor.

It is found in the cytoplasm. Functionally, participates actively in the response to hyperosmotic and heat shock by preventing the aggregation of stress-denatured proteins and by disaggregating proteins, also in an autonomous, DnaK-independent fashion. Unfolded proteins bind initially to DnaJ; upon interaction with the DnaJ-bound protein, DnaK hydrolyzes its bound ATP, resulting in the formation of a stable complex. GrpE releases ADP from DnaK; ATP binding to DnaK triggers the release of the substrate protein, thus completing the reaction cycle. Several rounds of ATP-dependent interactions between DnaJ, DnaK and GrpE are required for fully efficient folding. Also involved, together with DnaK and GrpE, in the DNA replication of plasmids through activation of initiation proteins. This Vibrio harveyi (Beneckea harveyi) protein is Chaperone protein DnaJ.